The chain runs to 705 residues: Effector protein AvrPphDPsv (705 aa).

The segment covering Met1–Pro15 has biased composition (polar residues). Disordered regions lie at residues Met1–Ser40 and Arg175–Ser205.

Its subcellular location is the secreted. In terms of biological role, effector protein involved in non-host recognition. The protein is Effector protein AvrPphDPsv (avrPphDPsv) of Pseudomonas savastanoi (Pseudomonas syringae pv. savastanoi).